Consider the following 453-residue polypeptide: Bifunctional protein GlmU (453 aa).

The segment at 1 to 225 (MNIVILAAGT…EWETLGVNSK (225 aa)) is pyrophosphorylase. UDP-N-acetyl-alpha-D-glucosamine-binding positions include 6–9 (LAAG), Lys20, Gln71, 76–77 (GT), 98–100 (YGD), Gly135, Glu150, Asn165, and Asn223. Residue Asp100 participates in Mg(2+) binding. Position 223 (Asn223) interacts with Mg(2+). A linker region spans residues 226–246 (QQLAELERIHQRNVADALLVA). The N-acetyltransferase stretch occupies residues 247–453 (GVTLADPARL…GYVRPTKKKS (207 aa)). The UDP-N-acetyl-alpha-D-glucosamine site is built by Arg329 and Lys347. Catalysis depends on His359, which acts as the Proton acceptor. 2 residues coordinate UDP-N-acetyl-alpha-D-glucosamine: Tyr362 and Asn373. Residues Ala376, 382–383 (NY), Ser401, and Ala419 each bind acetyl-CoA.

This sequence in the N-terminal section; belongs to the N-acetylglucosamine-1-phosphate uridyltransferase family. The protein in the C-terminal section; belongs to the transferase hexapeptide repeat family. In terms of assembly, homotrimer. It depends on Mg(2+) as a cofactor.

Its subcellular location is the cytoplasm. The catalysed reaction is alpha-D-glucosamine 1-phosphate + acetyl-CoA = N-acetyl-alpha-D-glucosamine 1-phosphate + CoA + H(+). The enzyme catalyses N-acetyl-alpha-D-glucosamine 1-phosphate + UTP + H(+) = UDP-N-acetyl-alpha-D-glucosamine + diphosphate. Its pathway is nucleotide-sugar biosynthesis; UDP-N-acetyl-alpha-D-glucosamine biosynthesis; N-acetyl-alpha-D-glucosamine 1-phosphate from alpha-D-glucosamine 6-phosphate (route II): step 2/2. The protein operates within nucleotide-sugar biosynthesis; UDP-N-acetyl-alpha-D-glucosamine biosynthesis; UDP-N-acetyl-alpha-D-glucosamine from N-acetyl-alpha-D-glucosamine 1-phosphate: step 1/1. It participates in bacterial outer membrane biogenesis; LPS lipid A biosynthesis. Its function is as follows. Catalyzes the last two sequential reactions in the de novo biosynthetic pathway for UDP-N-acetylglucosamine (UDP-GlcNAc). The C-terminal domain catalyzes the transfer of acetyl group from acetyl coenzyme A to glucosamine-1-phosphate (GlcN-1-P) to produce N-acetylglucosamine-1-phosphate (GlcNAc-1-P), which is converted into UDP-GlcNAc by the transfer of uridine 5-monophosphate (from uridine 5-triphosphate), a reaction catalyzed by the N-terminal domain. The sequence is that of Bifunctional protein GlmU from Paraburkholderia xenovorans (strain LB400).